The chain runs to 335 residues: Glyceraldehyde-3-phosphate dehydrogenase (335 aa).

NAD(+) is bound by residues 10-11, D33, R77, and S119; that span reads RI. D-glyceraldehyde 3-phosphate-binding positions include 150–152, T181, 210–211, and R233; these read SCT and TG. Residue C151 is the Nucleophile of the active site. Residue N315 participates in NAD(+) binding.

The protein belongs to the glyceraldehyde-3-phosphate dehydrogenase family. In terms of assembly, homotetramer.

It localises to the cytoplasm. The catalysed reaction is D-glyceraldehyde 3-phosphate + phosphate + NAD(+) = (2R)-3-phospho-glyceroyl phosphate + NADH + H(+). The protein operates within carbohydrate degradation; glycolysis; pyruvate from D-glyceraldehyde 3-phosphate: step 1/5. Functionally, catalyzes the oxidative phosphorylation of glyceraldehyde 3-phosphate (G3P) to 1,3-bisphosphoglycerate (BPG) using the cofactor NAD. The first reaction step involves the formation of a hemiacetal intermediate between G3P and a cysteine residue, and this hemiacetal intermediate is then oxidized to a thioester, with concomitant reduction of NAD to NADH. The reduced NADH is then exchanged with the second NAD, and the thioester is attacked by a nucleophilic inorganic phosphate to produce BPG. This is Glyceraldehyde-3-phosphate dehydrogenase (gap) from Chlamydia pneumoniae (Chlamydophila pneumoniae).